The following is a 64-amino-acid chain: Large ribosomal subunit protein bL32 (64 aa).

Positions 1–35 (MAVQKSRVTPSRRGQRRSHDALTAKQLSTDPTSGE) are disordered.

The protein belongs to the bacterial ribosomal protein bL32 family.

The polypeptide is Large ribosomal subunit protein bL32 (Xanthomonas campestris pv. campestris (strain 8004)).